Reading from the N-terminus, the 207-residue chain is Small ribosomal subunit protein uS4 (207 aa).

The interval 30-53 (DKSKFDTKPGQHGRTSGQRTSDFG) is disordered. Over residues 42-52 (GRTSGQRTSDF) the composition is skewed to polar residues. Positions 97–157 (SRLDNVVYRM…EKSKKQARIV (61 aa)) constitute an S4 RNA-binding domain.

Belongs to the universal ribosomal protein uS4 family. In terms of assembly, part of the 30S ribosomal subunit. Contacts protein S5. The interaction surface between S4 and S5 is involved in control of translational fidelity.

In terms of biological role, one of the primary rRNA binding proteins, it binds directly to 16S rRNA where it nucleates assembly of the body of the 30S subunit. Its function is as follows. With S5 and S12 plays an important role in translational accuracy. The polypeptide is Small ribosomal subunit protein uS4 (Delftia acidovorans (strain DSM 14801 / SPH-1)).